The following is a 428-amino-acid chain: 3-phosphoshikimate 1-carboxyvinyltransferase (428 aa).

3-phosphoshikimate-binding residues include K21, S22, and R26. Residue K21 participates in phosphoenolpyruvate binding. Phosphoenolpyruvate-binding residues include G91 and R119. The 3-phosphoshikimate site is built by S164, Q166, D313, and K340. Phosphoenolpyruvate is bound at residue Q166. D313 serves as the catalytic Proton acceptor. 2 residues coordinate phosphoenolpyruvate: R344 and R386.

Belongs to the EPSP synthase family. Monomer.

The protein localises to the cytoplasm. The catalysed reaction is 3-phosphoshikimate + phosphoenolpyruvate = 5-O-(1-carboxyvinyl)-3-phosphoshikimate + phosphate. It functions in the pathway metabolic intermediate biosynthesis; chorismate biosynthesis; chorismate from D-erythrose 4-phosphate and phosphoenolpyruvate: step 6/7. In terms of biological role, catalyzes the transfer of the enolpyruvyl moiety of phosphoenolpyruvate (PEP) to the 5-hydroxyl of shikimate-3-phosphate (S3P) to produce enolpyruvyl shikimate-3-phosphate and inorganic phosphate. The polypeptide is 3-phosphoshikimate 1-carboxyvinyltransferase (Campylobacter jejuni subsp. jejuni serotype O:23/36 (strain 81-176)).